Consider the following 342-residue polypeptide: Ferredoxin--NADP reductase (342 aa).

Residues Cys17, Asp36, Gln44, Tyr49, Val89, Phe124, Asp289, and Thr330 each coordinate FAD.

This sequence belongs to the ferredoxin--NADP reductase type 2 family. Homodimer. It depends on FAD as a cofactor.

The enzyme catalyses 2 reduced [2Fe-2S]-[ferredoxin] + NADP(+) + H(+) = 2 oxidized [2Fe-2S]-[ferredoxin] + NADPH. This Nitrobacter hamburgensis (strain DSM 10229 / NCIMB 13809 / X14) protein is Ferredoxin--NADP reductase.